We begin with the raw amino-acid sequence, 276 residues long: S-adenosylmethionine decarboxylase proenzyme (276 aa).

The active-site Schiff-base intermediate with substrate; via pyruvic acid is Ser124. At Ser124 the chain carries Pyruvic acid (Ser); by autocatalysis. His129 (proton acceptor; for processing activity) is an active-site residue. Catalysis depends on Cys152, which acts as the Proton donor; for catalytic activity.

This sequence belongs to the prokaryotic AdoMetDC family. Type 2 subfamily. As to quaternary structure, heterooctamer of four alpha and four beta chains arranged as a tetramer of alpha/beta heterodimers. Pyruvate serves as cofactor. Post-translationally, is synthesized initially as an inactive proenzyme. Formation of the active enzyme involves a self-maturation process in which the active site pyruvoyl group is generated from an internal serine residue via an autocatalytic post-translational modification. Two non-identical subunits are generated from the proenzyme in this reaction, and the pyruvate is formed at the N-terminus of the alpha chain, which is derived from the carboxyl end of the proenzyme. The post-translation cleavage follows an unusual pathway, termed non-hydrolytic serinolysis, in which the side chain hydroxyl group of the serine supplies its oxygen atom to form the C-terminus of the beta chain, while the remainder of the serine residue undergoes an oxidative deamination to produce ammonia and the pyruvoyl group blocking the N-terminus of the alpha chain.

The enzyme catalyses S-adenosyl-L-methionine + H(+) = S-adenosyl 3-(methylsulfanyl)propylamine + CO2. The protein operates within amine and polyamine biosynthesis; S-adenosylmethioninamine biosynthesis; S-adenosylmethioninamine from S-adenosyl-L-methionine: step 1/1. Catalyzes the decarboxylation of S-adenosylmethionine to S-adenosylmethioninamine (dcAdoMet), the propylamine donor required for the synthesis of the polyamines spermine and spermidine from the diamine putrescine. This chain is S-adenosylmethionine decarboxylase proenzyme, found in Desulfitobacterium hafniense (strain DSM 10664 / DCB-2).